We begin with the raw amino-acid sequence, 258 residues long: Aspartate/glutamate leucyltransferase (258 aa).

It belongs to the R-transferase family. Bpt subfamily.

It is found in the cytoplasm. The catalysed reaction is N-terminal L-glutamyl-[protein] + L-leucyl-tRNA(Leu) = N-terminal L-leucyl-L-glutamyl-[protein] + tRNA(Leu) + H(+). The enzyme catalyses N-terminal L-aspartyl-[protein] + L-leucyl-tRNA(Leu) = N-terminal L-leucyl-L-aspartyl-[protein] + tRNA(Leu) + H(+). Functionally, functions in the N-end rule pathway of protein degradation where it conjugates Leu from its aminoacyl-tRNA to the N-termini of proteins containing an N-terminal aspartate or glutamate. This Bradyrhizobium sp. (strain BTAi1 / ATCC BAA-1182) protein is Aspartate/glutamate leucyltransferase.